Consider the following 437-residue polypeptide: Cysteine--tRNA ligase (437 aa).

Cys-31 serves as a coordination point for Zn(2+). Positions 33-43 (PTVYNDLHLGN) match the 'HIGH' region motif. The Zn(2+) site is built by Cys-205, His-230, and Glu-234. The 'KMSKS' region motif lies at 262-266 (KMSKS). Lys-265 contributes to the ATP binding site.

The protein belongs to the class-I aminoacyl-tRNA synthetase family. As to quaternary structure, monomer. The cofactor is Zn(2+).

It localises to the cytoplasm. The enzyme catalyses tRNA(Cys) + L-cysteine + ATP = L-cysteinyl-tRNA(Cys) + AMP + diphosphate. This is Cysteine--tRNA ligase (cysS) from Mycoplasma pneumoniae (strain ATCC 29342 / M129 / Subtype 1) (Mycoplasmoides pneumoniae).